Consider the following 374-residue polypeptide: Protein-glutamate methylesterase/protein-glutamine glutaminase (374 aa).

One can recognise a Response regulatory domain in the interval 4-121 (KVLVVDDSGF…SRNPDKVKQM (118 aa)). Residue aspartate 55 is modified to 4-aspartylphosphate. The segment at 144–186 (PVAAPVPASSPAPASSFASPAPARPAATARAAAPAASHSPAPK) is disordered. Positions 154–183 (PAPASSFASPAPARPAATARAAAPAASHSP) are enriched in low complexity. A CheB-type methylesterase domain is found at 183-374 (PAPKRKPYKL…IGKHLVEACV (192 aa)). Catalysis depends on residues serine 198, histidine 225, and aspartate 318.

Belongs to the CheB family. In terms of processing, phosphorylated by CheA. Phosphorylation of the N-terminal regulatory domain activates the methylesterase activity.

It is found in the cytoplasm. The enzyme catalyses [protein]-L-glutamate 5-O-methyl ester + H2O = L-glutamyl-[protein] + methanol + H(+). It catalyses the reaction L-glutaminyl-[protein] + H2O = L-glutamyl-[protein] + NH4(+). In terms of biological role, involved in chemotaxis. Part of a chemotaxis signal transduction system that modulates chemotaxis in response to various stimuli. Catalyzes the demethylation of specific methylglutamate residues introduced into the chemoreceptors (methyl-accepting chemotaxis proteins or MCP) by CheR. Also mediates the irreversible deamidation of specific glutamine residues to glutamic acid. In Pseudomonas putida (Arthrobacter siderocapsulatus), this protein is Protein-glutamate methylesterase/protein-glutamine glutaminase.